Here is a 1107-residue protein sequence, read N- to C-terminus: OTU domain-containing protein 4 (1107 aa).

M1 is modified (N-acetylmethionine). One can recognise an OTU domain in the interval 34 to 155 (LYRKLVAKDG…GNHYDIVYPI (122 aa)). Residues 39–45 (VAKDGSC) are cys-loop. D42 is an active-site residue. Residue C45 is the Nucleophile of the active site. Positions 94-104 (LENPQEWVGQV) are variable-loop. Y120 bears the Phosphotyrosine mark. S126 and S128 each carry phosphoserine. A Phosphothreonine modification is found at T131. The tract at residues 143 to 148 (FSNGNH) is his-loop. Residue H148 is part of the active site. S166, S199, S202, and S204 each carry phosphoserine. Residues 195–206 (EESNSEISDSED) show a composition bias toward acidic residues. Disordered stretches follow at residues 195-239 (EESN…SADL) and 322-431 (KHTP…DFDH). The span at 226–236 (GSENPKNNGNS) shows a compositional bias: polar residues. S340 bears the Phosphoserine mark. Positions 392 to 403 (SSHSTGSQSQKS) are enriched in low complexity. Residues 419 to 431 (RKPDRERAEDFDH) are compositionally biased toward basic and acidic residues. Y438 carries the phosphotyrosine modification. S442 carries the phosphoserine modification. Residue Y459 is modified to Phosphotyrosine. Positions 470–568 (PALSSSSVSQ…KPAEHIPLSN (99 aa)) are disordered. The segment covering 473–486 (SSSSVSQSPSQNSN) has biased composition (low complexity). Over residues 495–528 (HARDRKGSMRRADAEERKDKDSLRGHTHVDKKPE) the composition is skewed to basic and acidic residues. A phosphoserine mark is found at S544 and S895. The segment at 918 to 1107 (LSAASVSSKH…MGDGHRGQHT (190 aa)) is disordered. Over residues 963–994 (NREREPGSAEPEPKRTIQSLKEKPEKVKDPKT) the composition is skewed to basic and acidic residues. Residues S1000, S1005, S1016, and S1017 each carry the phosphoserine modification. Residues 1032–1041 (SKQFYNQTYG) are compositionally biased toward polar residues. S1042 bears the Phosphoserine mark. Composition is skewed to basic and acidic residues over residues 1060–1079 (VRGE…EGYQ) and 1089–1107 (YRGD…GQHT).

As to quaternary structure, interacts with MYD88; the interaction is direct. Interacts with ALKBH3; the interaction is direct. Interacts with USP7; the interaction is direct. Interacts with USP9X; the interaction is direct. Phosphorylation at Ser-202 and Ser-204 activates 'Lys-63'-specific deubiquitinase activity. Induced upon stimulation with IL1B.

It is found in the cytoplasm. It localises to the nucleus. It catalyses the reaction Thiol-dependent hydrolysis of ester, thioester, amide, peptide and isopeptide bonds formed by the C-terminal Gly of ubiquitin (a 76-residue protein attached to proteins as an intracellular targeting signal).. Its activity is regulated as follows. Phosphorylation on Ser-202 and Ser-204 induces 'Lys-63'-specific deubiquitinase activity. Its function is as follows. Deubiquitinase which hydrolyzes the isopeptide bond between the ubiquitin C-terminus and the lysine epsilon-amino group of the target protein. May negatively regulate inflammatory and pathogen recognition signaling in innate immune response. Upon phosphorylation at Ser-202 and Ser-204 residues, via IL-1 receptor and Toll-like receptor signaling pathway, specifically deubiquitinates 'Lys-63'-polyubiquitinated MYD88 adapter protein triggering down-regulation of NF-kappa-B-dependent transcription of inflammatory mediators. Independently of the catalytic activity, acts as a scaffold for alternative deubiquitinases to assemble specific deubiquitinase-substrate complexes. Associates with USP7 and USP9X deubiquitinases to stabilize alkylation repair enzyme ALKBH3, thereby promoting the repair of alkylated DNA lesions. The protein is OTU domain-containing protein 4 of Mus musculus (Mouse).